The primary structure comprises 495 residues: ATP synthase subunit beta, chloroplastic (495 aa).

ATP is bound at residue 172-179; that stretch reads GGAGVGKT.

The protein belongs to the ATPase alpha/beta chains family. As to quaternary structure, F-type ATPases have 2 components, CF(1) - the catalytic core - and CF(0) - the membrane proton channel. CF(1) has five subunits: alpha(3), beta(3), gamma(1), delta(1), epsilon(1). CF(0) has four main subunits: a(1), b(1), b'(1) and c(9-12).

It is found in the plastid. Its subcellular location is the chloroplast thylakoid membrane. It carries out the reaction ATP + H2O + 4 H(+)(in) = ADP + phosphate + 5 H(+)(out). Its function is as follows. Produces ATP from ADP in the presence of a proton gradient across the membrane. The catalytic sites are hosted primarily by the beta subunits. This chain is ATP synthase subunit beta, chloroplastic, found in Hyacinthoides non-scripta (English bluebell).